We begin with the raw amino-acid sequence, 482 residues long: MDYHMDYIPNEVISHQGERFVDKYVDRKILKNKKSLLVIISLSVLSVVGFILFYFTPNFRKSDLFKNSSVENNNDDYIINSLLKSPNGKKFIVSKIDEALSFYDNKMKDINKNNNNNTSSDFKGLSLFKENKPSNNFIHNENYFINVFDHKFLMNNVEHINQFYTFIKTNNKQYNSPNEMKERFQVFLQNAHKVKMHNNNKKSLYKKELNRFADLTYHEFKSKYLTLRSSKPLKNSKYLLDQINYDAVIKKYKGNENFDHAAYDWRLHSGVTPVKDQKNCGSCWAFSSIGSVESQYAIRKNKLITLSEQELVDCSFKNYGCNGGLINNAFEDMIELGGICTDDDYPYVSDAPNLCNIDRCTEKYGIKNYLSVPDNKLKEALRFLGPISISIAVSDDFPFYKEGIFDGECGDELNHAVMLVGFGMKEIVNPLTKKGEKHYYYIIKNSWGQQWGERGFINIETDESGLMRKCGLGTDAFIPLIE.

Over Met1–Ser35 the chain is Cytoplasmic. The propeptide at Met1–Asp241 is activation peptide. The Bipartite vacuolar targeting signal 1 signature appears at Gln16–Val25. Residues Leu36–Thr56 traverse the membrane as a helical; Signal-anchor for type II membrane protein segment. Residues Pro57–Glu482 lie on the Lumenal side of the membrane. The N-linked (GlcNAc...) asparagine glycan is linked to Asn67. The Bipartite vacuolar targeting signal 2 motif lies at Lys84–Asn105. A glycan (N-linked (GlcNAc...) asparagine) is linked at Asn117. Residues Gln242–Phe258 carry the Nose motif; required for the correct folding of the mature form motif. 4 disulfides stabilise this stretch: Cys280/Cys321, Cys314/Cys355, Cys340/Cys360, and Cys409/Cys470. Cys283 is an active-site residue. Residue His415 is part of the active site. Residues Glu426–Gly435 carry the Arm motif; binds to host hemoglobin and required for the inhibitory interaction between the propeptide and the catalytic domain motif.

The protein belongs to the peptidase C1 family. In terms of assembly, component of the hemozoin formation complex (HFC) composed of falcipains FP2A and/or FP2B, plasmepsins PMII, PMIII/HAP and PMIV, heme detoxifying protein HDP and falcilysin FLN. The HFC complex is involved in hemoglobin degradation and detoxification of heme in the food vacuole during the asexual blood stage.

The protein localises to the vacuole. Its subcellular location is the membrane. Cysteine protease which cleaves native host hemoglobin in the food vacuole during the asexual blood stage. Preferentially cleaves substrates which have a leucine at the P2 position. This Plasmodium falciparum (isolate 3D7) protein is Falcipain-2b.